A 436-amino-acid polypeptide reads, in one-letter code: Gamma-glutamyl phosphate reductase (436 aa).

This sequence belongs to the gamma-glutamyl phosphate reductase family.

It is found in the cytoplasm. It carries out the reaction L-glutamate 5-semialdehyde + phosphate + NADP(+) = L-glutamyl 5-phosphate + NADPH + H(+). It participates in amino-acid biosynthesis; L-proline biosynthesis; L-glutamate 5-semialdehyde from L-glutamate: step 2/2. Catalyzes the NADPH-dependent reduction of L-glutamate 5-phosphate into L-glutamate 5-semialdehyde and phosphate. The product spontaneously undergoes cyclization to form 1-pyrroline-5-carboxylate. The polypeptide is Gamma-glutamyl phosphate reductase (Prochlorococcus marinus (strain SARG / CCMP1375 / SS120)).